Reading from the N-terminus, the 407-residue chain is Putative serine/threonine-protein kinase C01C4.3 (407 aa).

Residues N33–S57 are compositionally biased toward polar residues. The tract at residues N33–N68 is disordered. One can recognise a Protein kinase domain in the interval Y126–L397. Residues L132–I140 and K155 each bind ATP. N251 (proton acceptor) is an active-site residue.

It belongs to the protein kinase superfamily. Ser/Thr protein kinase family.

It catalyses the reaction L-seryl-[protein] + ATP = O-phospho-L-seryl-[protein] + ADP + H(+). The catalysed reaction is L-threonyl-[protein] + ATP = O-phospho-L-threonyl-[protein] + ADP + H(+). This Caenorhabditis elegans protein is Putative serine/threonine-protein kinase C01C4.3.